A 514-amino-acid chain; its full sequence is ATP synthase subunit alpha (514 aa).

Residue 170–177 (GDRQIGKT) participates in ATP binding.

This sequence belongs to the ATPase alpha/beta chains family. As to quaternary structure, F-type ATPases have 2 components, CF(1) - the catalytic core - and CF(0) - the membrane proton channel. CF(1) has five subunits: alpha(3), beta(3), gamma(1), delta(1), epsilon(1). CF(0) has three main subunits: a(1), b(2) and c(9-12). The alpha and beta chains form an alternating ring which encloses part of the gamma chain. CF(1) is attached to CF(0) by a central stalk formed by the gamma and epsilon chains, while a peripheral stalk is formed by the delta and b chains.

It localises to the cell inner membrane. The catalysed reaction is ATP + H2O + 4 H(+)(in) = ADP + phosphate + 5 H(+)(out). Its function is as follows. Produces ATP from ADP in the presence of a proton gradient across the membrane. The alpha chain is a regulatory subunit. The sequence is that of ATP synthase subunit alpha from Pseudomonas putida (strain GB-1).